The following is a 676-amino-acid chain: Envelope glycoprotein (676 aa).

The first 32 residues, 1 to 32 (MGASGILQLPRERFRKTSFFVWVIILFHKVFS), serve as a signal peptide directing secretion. Residues 33–650 (IPLGVVHNNT…GSNWWTGWKQ (618 aa)) lie on the Extracellular side of the membrane. Residue asparagine 40 is glycosylated (N-linked (GlcNAc...) asparagine; by host). Disulfide bonds link cysteine 53/cysteine 609, cysteine 108/cysteine 135, cysteine 121/cysteine 147, cysteine 511/cysteine 556, and cysteine 601/cysteine 608. The tract at residues 54-201 (RDKLSSTSQL…DFFQSPPLHE (148 aa)) is receptor-binding. N-linked (GlcNAc...) asparagine; by host glycans are attached at residues asparagine 204, asparagine 228, asparagine 257, asparagine 268, and asparagine 296. Residues 305–485 (ELSFVPVPET…LSGPGFLTNT (181 aa)) form a mucin-like region region. The disordered stretch occupies residues 356–463 (IKGKDTMPTT…PTTLPEQHTA (108 aa)). The segment covering 361 to 374 (TMPTTVTGVPTTTP) has biased composition (low complexity). Residues 402 to 422 (TTQPAKTTSQPTNSTESTTLN) are compositionally biased toward polar residues. N-linked (GlcNAc...) asparagine; by host glycosylation is present at asparagine 414. Over residues 423–440 (PTSEPSSRGTGPSSPTVP) the composition is skewed to low complexity. The N-linked (GlcNAc...) asparagine; by host glycan is linked to asparagine 441. The segment covering 452-463 (TTPTTLPEQHTA) has biased composition (polar residues). The fusion peptide stretch occupies residues 524–539 (GAAIGLAWIPYFGPAA). A coiled-coil region spans residues 554-595 (LICGLRQLANETTQALQLFLRATTELRTFSILNRKAIDFLLQ). Residue asparagine 563 is glycosylated (N-linked (GlcNAc...) asparagine; by host). A coiled-coil region spans residues 615–634 (WTKNITDKIDQIIHDFVDNN). An N-linked (GlcNAc...) asparagine; by host glycan is attached at asparagine 618. A helical membrane pass occupies residues 651–671 (WVPAGIGITGVIIAIIALLCI). S-palmitoyl cysteine; by host attachment occurs at residues cysteine 670 and cysteine 672. The Cytoplasmic portion of the chain corresponds to 672–676 (CKFML).

This sequence belongs to the filoviruses glycoprotein family. Homotrimer; each monomer consists of a GP1 and a GP2 subunit linked by disulfide bonds. The resulting peplomers (GP1,2) protrude from the virus surface as spikes. GP1 and GP2delta are part of GP1,2delta soluble complexes released by ectodomain shedding. GP1,2 interacts with host integrin ITGAV/alpha-V and CLEC10A. Also binds human CD209 and CLEC4M (collectively referred to as DC-SIGN(R)), as well as human FOLR1. Interacts with host entry receptor NPC1. Post-translationally, the signal peptide region modulates GP's high mannose glycosylation, thereby determining the efficiency of the interactions with DC-SIGN(R). N-glycosylated. In terms of processing, O-glycosylated in the mucin-like region. Post-translationally, palmitoylation of GP2 is not required for its function. Specific enzymatic cleavages in vivo yield mature proteins. The precursor is processed into GP1 and GP2 by host cell furin in the trans Golgi, and maybe by other host proteases, to yield the mature GP1 and GP2 proteins. The cleavage site corresponds to the furin optimal cleavage sequence [KR]-X-[KR]-R. This cleavage does not seem to be required for function. After the internalization of the virus into cell endosomes, GP1 C-terminus is removed by the endosomal proteases cathepsin B, cathepsin L, or both, leaving a 19-kDa N-terminal fragment which is further digested by cathepsin B. Proteolytic processing of GP1,2 by host ADAM17 can remove the transmembrane anchor of GP2 and leads to shedding of complexes consisting in GP1 and truncated GP2 (GP1,2delta).

Its subcellular location is the virion membrane. The protein localises to the host cell membrane. The protein resides in the secreted. Functionally, GP1 is responsible for binding to the receptor(s) on target cells. Interacts with CD209/DC-SIGN and CLEC4M/DC-SIGNR which act as cofactors for virus entry into the host cell. Binding to CD209 and CLEC4M, which are respectively found on dendritic cells (DCs), and on endothelial cells of liver sinusoids and lymph node sinuses, facilitate infection of macrophages and endothelial cells. These interactions not only facilitate virus cell entry, but also allow capture of viral particles by DCs and subsequent transmission to susceptible cells without DCs infection (trans infection). Binding to the macrophage specific lectin CLEC10A also seems to enhance virus infectivity. Interaction with FOLR1/folate receptor alpha may be a cofactor for virus entry in some cell types, although results are contradictory. Members of the Tyro3 receptor tyrosine kinase family also seem to be cell entry factors in filovirus infection. Once attached, the virions are internalized through clathrin-dependent endocytosis and/or macropinocytosis. After internalization of the virus into the endosomes of the host cell, proteolysis of GP1 by two cysteine proteases, CTSB/cathepsin B and CTSL/cathepsin L presumably induces a conformational change of GP2, unmasking its fusion peptide and initiating membranes fusion. GP2 acts as a class I viral fusion protein. Under the current model, the protein has at least 3 conformational states: pre-fusion native state, pre-hairpin intermediate state, and post-fusion hairpin state. During viral and target cell membrane fusion, the coiled coil regions (heptad repeats) assume a trimer-of-hairpins structure, positioning the fusion peptide in close proximity to the C-terminal region of the ectodomain. The formation of this structure appears to drive apposition and subsequent fusion of viral and target cell membranes. Responsible for penetration of the virus into the cell cytoplasm by mediating the fusion of the membrane of the endocytosed virus particle with the endosomal membrane. Low pH in endosomes induces an irreversible conformational change in GP2, releasing the fusion hydrophobic peptide. In terms of biological role, GP1,2 which is the disulfid-linked complex of GP1 and GP2, mediates endothelial cell activation and decreases endothelial barrier function. Mediates activation of primary macrophages. At terminal stages of the viral infection, when its expression is high, GP1,2 down-modulates the expression of various host cell surface molecules that are essential for immune surveillance and cell adhesion. Down-modulates integrins ITGA1, ITGA2, ITGA3, ITGA4, ITGA5, ITGA6, ITGAV and ITGB1. GP1,2 alters the cellular recycling of the dimer alpha-V/beta-3 via a dynamin-dependent pathway. Decrease in the host cell surface expression of various adhesion molecules may lead to cell detachment, contributing to the disruption of blood vessel integrity and hemorrhages developed during Ebola virus infection (cytotoxicity). This cytotoxicity appears late in the infection, only after the massive release of viral particles by infected cells. Down-modulation of host MHC-I, leading to altered recognition by immune cells, may explain the immune suppression and inflammatory dysfunction linked to Ebola infection. Also down-modulates EGFR surface expression. Counteracts the antiviral effect of host tetherin. Its function is as follows. GP2delta is part of the complex GP1,2delta released by host ADAM17 metalloprotease. This secreted complex may play a role in the pathogenesis of the virus by efficiently blocking the neutralizing antibodies that would otherwise neutralize the virus surface glycoproteins GP1,2. Might therefore contribute to the lack of inflammatory reaction seen during infection in spite the of extensive necrosis and massive virus production. GP1,2delta does not seem to be involved in activation of primary macrophages. The sequence is that of Envelope glycoprotein (GP) from Tai Forest ebolavirus (strain Cote d'Ivoire-94) (TAFV).